The primary structure comprises 133 residues: Small ribosomal subunit protein uS8 (133 aa).

It belongs to the universal ribosomal protein uS8 family. In terms of assembly, part of the 30S ribosomal subunit. Contacts proteins S5 and S12.

Functionally, one of the primary rRNA binding proteins, it binds directly to 16S rRNA central domain where it helps coordinate assembly of the platform of the 30S subunit. The sequence is that of Small ribosomal subunit protein uS8 from Orientia tsutsugamushi (strain Boryong) (Rickettsia tsutsugamushi).